A 383-amino-acid polypeptide reads, in one-letter code: Chorismate synthase (383 aa).

Arginine 39 and arginine 45 together coordinate NADP(+). Residues 128-130, glycine 291, 306-310, and arginine 332 contribute to the FMN site; these read RAS and KPIAT.

Belongs to the chorismate synthase family. In terms of assembly, homotetramer. The cofactor is FMNH2.

It catalyses the reaction 5-O-(1-carboxyvinyl)-3-phosphoshikimate = chorismate + phosphate. It functions in the pathway metabolic intermediate biosynthesis; chorismate biosynthesis; chorismate from D-erythrose 4-phosphate and phosphoenolpyruvate: step 7/7. Functionally, catalyzes the anti-1,4-elimination of the C-3 phosphate and the C-6 proR hydrogen from 5-enolpyruvylshikimate-3-phosphate (EPSP) to yield chorismate, which is the branch point compound that serves as the starting substrate for the three terminal pathways of aromatic amino acid biosynthesis. This reaction introduces a second double bond into the aromatic ring system. This Thermus thermophilus (strain ATCC 27634 / DSM 579 / HB8) protein is Chorismate synthase.